We begin with the raw amino-acid sequence, 156 residues long: Small ribosomal subunit protein uS7 (156 aa).

Belongs to the universal ribosomal protein uS7 family. In terms of assembly, part of the 30S ribosomal subunit. Contacts proteins S9 and S11.

One of the primary rRNA binding proteins, it binds directly to 16S rRNA where it nucleates assembly of the head domain of the 30S subunit. Is located at the subunit interface close to the decoding center, probably blocks exit of the E-site tRNA. The sequence is that of Small ribosomal subunit protein uS7 from Rippkaea orientalis (strain PCC 8801 / RF-1) (Cyanothece sp. (strain PCC 8801)).